The chain runs to 787 residues: DNA ligase (787 aa).

NAD(+) is bound by residues aspartate 32–aspartate 36, serine 81–leucine 82, and glutamate 121. The active-site N6-AMP-lysine intermediate is lysine 123. Positions 144, 181, 297, and 321 each coordinate NAD(+). Zn(2+) contacts are provided by cysteine 415, cysteine 418, cysteine 445, and cysteine 451. The BRCT domain occupies valine 703–aspartate 787.

It belongs to the NAD-dependent DNA ligase family. LigA subfamily. Mg(2+) is required as a cofactor. Mn(2+) serves as cofactor.

The catalysed reaction is NAD(+) + (deoxyribonucleotide)n-3'-hydroxyl + 5'-phospho-(deoxyribonucleotide)m = (deoxyribonucleotide)n+m + AMP + beta-nicotinamide D-nucleotide.. Its function is as follows. DNA ligase that catalyzes the formation of phosphodiester linkages between 5'-phosphoryl and 3'-hydroxyl groups in double-stranded DNA using NAD as a coenzyme and as the energy source for the reaction. It is essential for DNA replication and repair of damaged DNA. The sequence is that of DNA ligase from Pseudomonas syringae pv. tomato (strain ATCC BAA-871 / DC3000).